The primary structure comprises 292 residues: ATP synthase gamma chain (292 aa).

It belongs to the ATPase gamma chain family. In terms of assembly, F-type ATPases have 2 components, CF(1) - the catalytic core - and CF(0) - the membrane proton channel. CF(1) has five subunits: alpha(3), beta(3), gamma(1), delta(1), epsilon(1). CF(0) has three main subunits: a, b and c.

The protein localises to the cell inner membrane. In terms of biological role, produces ATP from ADP in the presence of a proton gradient across the membrane. The gamma chain is believed to be important in regulating ATPase activity and the flow of protons through the CF(0) complex. The polypeptide is ATP synthase gamma chain (Bradyrhizobium sp. (strain ORS 278)).